A 617-amino-acid polypeptide reads, in one-letter code: MTVTEQTTARGFPLLPSRLSRGSQATRTTDNTAAALLLTFTVIAILWANSPWAQSYSTLLETHIGFGFGDHHFEMTVKHLVNDALMTFFFFIVGLEVTREFTIGELTDRSRAAVPVVAAAAGLIVPAIVFLAFNPSGDNAHAWGVVISTDTAFLVGALAIIKPKFPARVRLFLLTLAVVDDVGALVAIAVFYSDAIQVGPLVVAVAVLVALALVRFLPVARGPAYAVLGVALWVALYLAGIHPTLAGVAVALLIPVFTPERRPVERAVDQIRAFRQSPNSQYARAASRSLRESISINERMQTAVGPAVSFVILPLFALVNAGVLLDGQSLMTALRSPLTWGVVAGLVIGKFVGITGATWLMRRTGLGVLAPGLTLRRIAGGAALSGIGFTISLFIVDIAISDSSRQDQARIGVLAASVLAFVFGWAIFRITDWLSPPEPVGLKLLRPVEPDRDHVRGRYDAPLVLVEYGDFECPFCSRATGAIDEVRAHFGDDLLYVWRHFPLERAHPRAFDAARASEAAALQGKFWEMAHELFDHQDDLEWSDMYRYAVAAGCDIEQFDQDVRVHSSKVLHRVTDDAEDAEAMDLNATPTLFVNGIRHKGPWDAASLIRALEAGRR.

Residues 1–433 (MTVTEQTTAR…GWAIFRITDW (433 aa)) are na(+)/H(+) antiporter NhaA. Helical transmembrane passes span 33–53 (AAAL…SPWA), 75–95 (MTVK…IVGL), 113–133 (AVPV…FLAF), 141–161 (HAWG…LAII), 171–191 (LFLL…IAVF), 194–214 (DAIQ…LALV), 234–254 (VALY…ALLI), 304–324 (VGPA…AGVL), 340–360 (WGVV…ATWL), 378–398 (IAGG…IVDI), and 411–431 (IGVL…FRIT). A Thioredoxin domain is found at 434 to 617 (LSPPEPVGLK…LIRALEAGRR (184 aa)).

It in the N-terminal section; belongs to the NhaA Na(+)/H(+) (TC 2.A.33) antiporter family.

It localises to the cell membrane. The catalysed reaction is Na(+)(in) + 2 H(+)(out) = Na(+)(out) + 2 H(+)(in). Functionally, na(+)/H(+) antiporter that extrudes sodium in exchange for external protons. This Mycolicibacterium vanbaalenii (strain DSM 7251 / JCM 13017 / BCRC 16820 / KCTC 9966 / NRRL B-24157 / PYR-1) (Mycobacterium vanbaalenii) protein is Na(+)/H(+) antiporter NhaA 1.